Here is a 408-residue protein sequence, read N- to C-terminus: Prenyltransferase criF (408 aa).

Dimethylallyl diphosphate contacts are provided by R94, K181, Y183, R248, K250, Y252, Q334, Y336, Y400, and Y404.

Belongs to the tryptophan dimethylallyltransferase family. As to quaternary structure, homodimer.

The enzyme catalyses preechinulin + dimethylallyl diphosphate = tardioxopiperazine B + diphosphate. The catalysed reaction is preechinulin + dimethylallyl diphosphate = tardioxopiperazine A + diphosphate. It catalyses the reaction tardioxopiperazine A + dimethylallyl diphosphate = echinulin + diphosphate. It carries out the reaction tardioxopiperazine A + dimethylallyl diphosphate = variecolorin L + diphosphate. The enzyme catalyses neoechinulin A + dimethylallyl diphosphate = variecolorin G + diphosphate. The catalysed reaction is neoechinulin A + dimethylallyl diphosphate = isoechinulin A + diphosphate. It catalyses the reaction isoechinulin A + dimethylallyl diphosphate = dehydroechinulin + diphosphate. It carries out the reaction neoechinulin B + dimethylallyl diphosphate = isoechinulin B + diphosphate. The protein operates within secondary metabolite biosynthesis. It participates in alkaloid biosynthesis. Its function is as follows. Prenyltransferase; part of the gene cluster that mediates the biosynthesis of echinulin family alkaloid. The pathway begins with the biosynthesis of the cyclic dipeptide cyclo-L-Trp-L-Ala (cyclo-TA) by the NRPS criC via condensation of L-alanine and L-tryptophan. The prenyltransferase criA then catalyzes the first prenylation step, a reverse prenylation reaction at C2, to yield preechinulin. Preechinulin is the substrate of the cytochrome P450 monooxygenase criE that catalyzes the formation of the double bond between C10 and C11 to produce neoechulin A. The unique prenyltransferase criF functions as a competitive enzyme with criE for preechinulin metabolization and uses preechinulin for effective regiospecific prenylations. Preechinulin is prenylated by criF at C5 or C7. C7-prenylation leads to accumulation of tardioxopiperazine B without further modification by criF. In contrast, the C5-prenylated tardioxopiperazine A can be prenylated again by criF, predominantly at C7 to form echinulin or less frequently at C4 to give variecolorin L. CriF also accepts neoechilunin A to produce varlecolorin G (prenylation at C5) or isoechinulin A (prenylation at C7). CriF further converts isoechinulin A into dehydroechinulin. Moreover, a yet unidentified enzyme can also convert neoechilunin A into neoechilunin B by introducing a double bond between positions C14 and C17 and thus provides a further substrate to criF for C5 and C7 prenylation. This chain is Prenyltransferase criF, found in Aspergillus cristatus (Chinese Fuzhuan brick tea-fermentation fungus).